The sequence spans 463 residues: Tryptophan aminotransferase-related protein 4 (463 aa).

Residues 6–26 (LLLIVSIILNLVFTIHILYYS) traverse the membrane as a helical segment. Residues Tyr-124, 163 to 164 (TT), Asn-239, 259 to 262 (DYAY), 282 to 285 (SLSK), and Arg-293 each bind pyridoxal 5'-phosphate. Lys-285 carries the post-translational modification N6-(pyridoxal phosphate)lysine.

It belongs to the alliinase family. The cofactor is pyridoxal 5'-phosphate.

Its subcellular location is the membrane. Its function is as follows. Probable aminotransferase. The chain is Tryptophan aminotransferase-related protein 4 (TAR4) from Arabidopsis thaliana (Mouse-ear cress).